A 168-amino-acid chain; its full sequence is NADH-quinone oxidoreductase subunit E 2 (168 aa).

The [2Fe-2S] cluster site is built by Cys-77, Cys-82, Cys-118, and Cys-122.

This sequence belongs to the complex I 24 kDa subunit family. [2Fe-2S] cluster serves as cofactor.

The enzyme catalyses a quinone + NADH + 5 H(+)(in) = a quinol + NAD(+) + 4 H(+)(out). Functionally, NDH-1 shuttles electrons from NADH, via FMN and iron-sulfur (Fe-S) centers, to quinones in the respiratory chain. The immediate electron acceptor for the enzyme in this species is believed to be ubiquinone. Couples the redox reaction to proton translocation (for every two electrons transferred, four hydrogen ions are translocated across the cytoplasmic membrane), and thus conserves the redox energy in a proton gradient. This Rhizobium meliloti (strain 1021) (Ensifer meliloti) protein is NADH-quinone oxidoreductase subunit E 2 (nuoE2).